Consider the following 472-residue polypeptide: 12S seed storage protein CRA1 (472 aa).

Residues 1 to 24 (MARVSSLLSFCLTLLILFHGYAAQ) form the signal peptide. 2 disulfides stabilise this stretch: cysteine 36–cysteine 69 and cysteine 112–cysteine 289. A Cupin type-1 1 domain is found at 41–236 (LNALEPSHVL…ALKIDLQTAQ (196 aa)). The residue at position 115 (threonine 115) is a Phosphothreonine. Positions 259–283 (RPPLRGQRPQEEEEEEGRHGRHGNG) are disordered. Positions 295 to 444 (DNLDDPSRAD…GFQISPEEAR (150 aa)) constitute a Cupin type-1 2 domain. Position 312 is a phosphotyrosine (tyrosine 312). Serine 314 is modified (phosphoserine). Phosphothreonine occurs at positions 408 and 433.

This sequence belongs to the 11S seed storage protein (globulins) family. Hexamer; each subunit is composed of an acidic and a basic chain derived from a single precursor and linked by a disulfide bond. Phosphorylated in seeds on some Tyr residues in response to abscisic acid (ABA). In terms of processing, proteolytically processed during seed maturation at a conserved Asn-Gly peptide bond by an asparaginyl endopeptidase to produce two mature polypeptides referred to as alpha and beta subunits that are joined together by a disulfide bond. As to expression, accumulates in seeds 8 days after anthesis.

It localises to the protein storage vacuole. Seed storage protein. This is 12S seed storage protein CRA1 (CRA1) from Arabidopsis thaliana (Mouse-ear cress).